The chain runs to 618 residues: Glucose starvation modulator protein 1 (618 aa).

Positions 20-48 form a DNA-binding region, zn(2)-C6 fungal-type; that stretch reads CEFCHTKHIQCDVGRPCQNCLKRNIGKFC. The disordered stretch occupies residues 325–352; it reads ANANTHPSHNAKLESECDSSSHSDADLE. Residues 335–352 are compositionally biased toward basic and acidic residues; sequence AKLESECDSSSHSDADLE. In terms of domain architecture, PAS spans 466–538; the sequence is LLDLENMAKL…QIFNELLAFG (73 aa).

The protein belongs to the ERT1/acuK family.

The protein localises to the nucleus. Transcription factor which regulates nonfermentable carbon utilization. Binds specifically to 5'-CGGN(8)CGG-3' and 5'-CGGN(9)CGG-3' sequences in the promoter region. This Saccharomyces cerevisiae (strain ATCC 204508 / S288c) (Baker's yeast) protein is Glucose starvation modulator protein 1 (GSM1).